The primary structure comprises 148 residues: Lysozyme C (148 aa).

The signal sequence occupies residues 1–18 (MKALIVLGLVLLSVMVQG). Residues 19–148 (KVFERCELAR…VRQYVQGCGV (130 aa)) enclose the C-type lysozyme domain. 4 disulfides stabilise this stretch: Cys24-Cys146, Cys48-Cys134, Cys83-Cys99, and Cys95-Cys113. Residues Glu53 and Asp71 contribute to the active site.

It belongs to the glycosyl hydrolase 22 family. As to quaternary structure, monomer.

It carries out the reaction Hydrolysis of (1-&gt;4)-beta-linkages between N-acetylmuramic acid and N-acetyl-D-glucosamine residues in a peptidoglycan and between N-acetyl-D-glucosamine residues in chitodextrins.. In terms of biological role, lysozymes have primarily a bacteriolytic function; those in tissues and body fluids are associated with the monocyte-macrophage system and enhance the activity of immunoagents. The sequence is that of Lysozyme C (LYZ) from Gorilla gorilla gorilla (Western lowland gorilla).